We begin with the raw amino-acid sequence, 561 residues long: Glutamine--tRNA ligase (561 aa).

The 'HIGH' region motif lies at 34–44 (PEPNGYLHIGH). ATP-binding positions include 35-37 (EPN) and 41-47 (HIGHAKS). L-glutamine is bound by residues Asp67 and Tyr212. ATP is bound by residues Thr231, 261–262 (RL), and 269–271 (MSK). The 'KMSKS' region signature appears at 268–272 (VMSKR).

It belongs to the class-I aminoacyl-tRNA synthetase family. As to quaternary structure, monomer.

The protein resides in the cytoplasm. The enzyme catalyses tRNA(Gln) + L-glutamine + ATP = L-glutaminyl-tRNA(Gln) + AMP + diphosphate. The polypeptide is Glutamine--tRNA ligase (Idiomarina loihiensis (strain ATCC BAA-735 / DSM 15497 / L2-TR)).